The primary structure comprises 303 residues: Methionyl-tRNA formyltransferase (303 aa).

108–111 provides a ligand contact to (6S)-5,6,7,8-tetrahydrofolate; that stretch reads SDLP.

This sequence belongs to the Fmt family.

It carries out the reaction L-methionyl-tRNA(fMet) + (6R)-10-formyltetrahydrofolate = N-formyl-L-methionyl-tRNA(fMet) + (6S)-5,6,7,8-tetrahydrofolate + H(+). Attaches a formyl group to the free amino group of methionyl-tRNA(fMet). The formyl group appears to play a dual role in the initiator identity of N-formylmethionyl-tRNA by promoting its recognition by IF2 and preventing the misappropriation of this tRNA by the elongation apparatus. The polypeptide is Methionyl-tRNA formyltransferase (Rickettsia prowazekii (strain Madrid E)).